The following is a 90-amino-acid chain: Small ribosomal subunit protein uS19 (90 aa).

It belongs to the universal ribosomal protein uS19 family.

Functionally, protein S19 forms a complex with S13 that binds strongly to the 16S ribosomal RNA. The sequence is that of Small ribosomal subunit protein uS19 from Methylococcus capsulatus (strain ATCC 33009 / NCIMB 11132 / Bath).